The primary structure comprises 105 residues: NADH-quinone oxidoreductase subunit K (105 aa).

3 helical membrane-spanning segments follow: residues 4 to 24 (LTHY…GVIV), 28 to 48 (IIVI…SLVA), and 66 to 86 (LSIF…ALIV).

It belongs to the complex I subunit 4L family. As to quaternary structure, NDH-1 is composed of 14 different subunits. Subunits NuoA, H, J, K, L, M, N constitute the membrane sector of the complex.

The protein resides in the cell inner membrane. It carries out the reaction a quinone + NADH + 5 H(+)(in) = a quinol + NAD(+) + 4 H(+)(out). In terms of biological role, NDH-1 shuttles electrons from NADH, via FMN and iron-sulfur (Fe-S) centers, to quinones in the respiratory chain. The immediate electron acceptor for the enzyme in this species is believed to be ubiquinone. Couples the redox reaction to proton translocation (for every two electrons transferred, four hydrogen ions are translocated across the cytoplasmic membrane), and thus conserves the redox energy in a proton gradient. This chain is NADH-quinone oxidoreductase subunit K, found in Akkermansia muciniphila (strain ATCC BAA-835 / DSM 22959 / JCM 33894 / BCRC 81048 / CCUG 64013 / CIP 107961 / Muc).